The primary structure comprises 311 residues: GPN-loop GTPase 2 (311 aa).

20–25 is a GTP binding site; that stretch reads GSGKTT. The Gly-Pro-Asn (GPN)-loop; involved in dimer interface signature appears at 77-79; sequence GPN. 179 to 182 lines the GTP pocket; sequence SKMD.

It belongs to the GPN-loop GTPase family. As to quaternary structure, heterodimers with gpn1 or gpn3. Binds to RNA polymerase II (RNAPII).

Functionally, small GTPase required for proper localization of RNA polymerase II and III (RNAPII and RNAPIII). May act at an RNAP assembly step prior to nuclear import. In Danio rerio (Zebrafish), this protein is GPN-loop GTPase 2.